A 379-amino-acid chain; its full sequence is Queuine tRNA-ribosyltransferase (379 aa).

Asp94 acts as the Proton acceptor in catalysis. Substrate-binding positions include 94–98 (DSGGF), Asp148, Gln191, and Gly218. An RNA binding region spans residues 249–255 (GVGSPDA). The Nucleophile role is filled by Asp268. The interval 273 to 277 (TRIAR) is RNA binding; important for wobble base 34 recognition. Zn(2+) is bound by residues Cys306, Cys308, Cys311, and His337.

The protein belongs to the queuine tRNA-ribosyltransferase family. Homodimer. Within each dimer, one monomer is responsible for RNA recognition and catalysis, while the other monomer binds to the replacement base PreQ1. Zn(2+) is required as a cofactor.

It catalyses the reaction 7-aminomethyl-7-carbaguanine + guanosine(34) in tRNA = 7-aminomethyl-7-carbaguanosine(34) in tRNA + guanine. It functions in the pathway tRNA modification; tRNA-queuosine biosynthesis. Its function is as follows. Catalyzes the base-exchange of a guanine (G) residue with the queuine precursor 7-aminomethyl-7-deazaguanine (PreQ1) at position 34 (anticodon wobble position) in tRNAs with GU(N) anticodons (tRNA-Asp, -Asn, -His and -Tyr). Catalysis occurs through a double-displacement mechanism. The nucleophile active site attacks the C1' of nucleotide 34 to detach the guanine base from the RNA, forming a covalent enzyme-RNA intermediate. The proton acceptor active site deprotonates the incoming PreQ1, allowing a nucleophilic attack on the C1' of the ribose to form the product. After dissociation, two additional enzymatic reactions on the tRNA convert PreQ1 to queuine (Q), resulting in the hypermodified nucleoside queuosine (7-(((4,5-cis-dihydroxy-2-cyclopenten-1-yl)amino)methyl)-7-deazaguanosine). This is Queuine tRNA-ribosyltransferase from Staphylococcus aureus (strain bovine RF122 / ET3-1).